The following is a 169-amino-acid chain: MARGGDTGCTGPSETSASGAAAIALPGLEGPATDAQCQTLPLTVLKSRSPSPRSLPPALSCPPPQPAMLEHLSSLPTQMDYKGQKLAEQMFQGIILFSAIVGFIYGYVAEQFGWTVYIVMAGFAFSCLLTLPPWPIYRRHPLKWLPVQESSTDDKKPGERKIKRHAKNN.

Residues 1-93 are Cytoplasmic-facing; that stretch reads MARGGDTGCT…QKLAEQMFQG (93 aa). Positions 91 to 169 are (Microbial infection) Interaction with JEV NS2B; it reads FQGIILFSAI…RKIKRHAKNN (79 aa). The chain crosses the membrane as a helical span at residues 94-114; it reads IILFSAIVGFIYGYVAEQFGW. Residues 110-169 form a (Microbial infection) Interaction with HCV NS2 and HCV E2 region; that stretch reads EQFGWTVYIVMAGFAFSCLLTLPPWPIYRRHPLKWLPVQESSTDDKKPGERKIKRHAKNN. Position 115 (Thr-115) is a topological domain, lumenal. The helical transmembrane segment at 116-136 threads the bilayer; the sequence is VYIVMAGFAFSCLLTLPPWPI. At 137–169 the chain is on the cytoplasmic side; sequence YRRHPLKWLPVQESSTDDKKPGERKIKRHAKNN. A disordered region spans residues 148–169; it reads QESSTDDKKPGERKIKRHAKNN.

The protein belongs to the SPCS1 family. As to quaternary structure, component of the signal peptidase complex paralog A (SPC-A) composed of a catalytic subunit SEC11A and three accessory subunits SPCS1, SPCS2 and SPCS3. Component of the signal peptidase complex paralog C (SPC-C) composed of a catalytic subunit SEC11C and three accessory subunits SPCS1, SPCS2 and SPCS3. Within the complex, interacts with SPCS2 and SPCS3. The complex induces a local thinning of the ER membrane which is used to measure the length of the signal peptide (SP) h-region of protein substrates. This ensures the selectivity of the complex towards h-regions shorter than 18-20 amino acids. (Microbial infection) Interacts with hepatitis C virus (HCV) proteins NS2 and E2. Interacts with NS2B from Japanese encephalitis virus (JEV), West Nile virus (WNV), and Zika virus (ZIKV). Post-translationally, may be phosphorylated.

The protein localises to the endoplasmic reticulum membrane. In terms of biological role, component of the signal peptidase complex (SPC) which catalyzes the cleavage of N-terminal signal sequences from nascent proteins as they are translocated into the lumen of the endoplasmic reticulum. Dispensable for SPC enzymatic activity. Its function is as follows. (Microbial infection) Required for the post-translational processing of proteins involved in virion assembly and secretion from flaviviruses such as West Nile virus (WNV), Japanese encephalitis virus (JEV), Dengue virus type 2 (DENV-2), Yellow Fever virus (YFV), Zika virus (ZIKV) and hepatitis C virus (HCV). Plays a key role in the post-translational processing of flaviviral structural proteins prM, E, and NS1. In HCV, it is involved in virion assembly where it promotes the interaction between HCV virus proteins NS2 and E2. In Homo sapiens (Human), this protein is Signal peptidase complex subunit 1 (SPCS1).